The chain runs to 92 residues: Alpha-conotoxin FrXXA 2 (92 aa).

Residues 1–24 (MPKLEMMLLVLLILPLPYFDAAGG) form the signal peptide. Residues 25–45 (QAVQGDGHGDGMDRYLQRDDR) constitute a propeptide that is removed on maturation. 4 cysteine pairs are disulfide-bonded: cysteine 63/cysteine 72, cysteine 68/cysteine 80, cysteine 73/cysteine 90, and cysteine 78/cysteine 92.

It belongs to the conotoxin D superfamily. In terms of assembly, homodimer; disulfide-linked. The homodimer contains 10 disulfide bonds. Expressed by the venom duct.

It localises to the secreted. Functionally, alpha-conotoxins act on postsynaptic membranes, they bind to the nicotinic acetylcholine receptors (nAChR) and thus inhibit them. Through its two C-terminal domains, this homodimeric protein would bind to two nAChR allosteric sites, located outside the nAChR C-loop of the principal binding face and at the adjacent binding interface in a clockwise direction. Component 4b which seems to correspond to this toxin blocks both neuronal and muscular subtypes: human alpha-7/CHRNA7 (IC(50)=125 nM), human alpha-3-beta-2 (CHRNA3-CHRNB2) (IC(50)=282 nM), human alpha-4-beta-2 (CHRNA4-CHRNB2) (IC(50)=697 nM), mouse adult muscular subtype alpha-1-beta-1-delta-epsilon (CHRNA1-CHRNB1-CHRND-CHRNE) (IC(50)=351 nM), and mouse fetal muscular subtype alpha-1-beta-1-gamma-delta (CHRNA1-CHRNB1-CHRNG-CHRND) (IC(50)=447 nM). It shows different dissociation rates towards the different subtypes, with a very slow rate towards alpha-7 subtype (almost irreversible), followed by the adult muscular subtype, the fetal muscular subtype, alpha-3-beta-2 and alpha-4-beta-2 (almost entirely reversible within a few minutes of washing). The polypeptide is Alpha-conotoxin FrXXA 2 (Conus fergusoni (Ferguson's cone)).